Reading from the N-terminus, the 952-residue chain is Respiratory burst oxidase homolog protein E (952 aa).

The Cytoplasmic segment spans residues 1–392 (MKLSPLSFST…QCLILDNWQR (392 aa)). EF-hand-like stretches follow at residues 211–219 (SKNGLLARD) and 245–256 (RRQKLEKITKDE). EF-hand domains follow at residues 268–303 (SFDARLQIFFDMADSNEDGKITREEIKELLMLSASA) and 312–347 (QAEEYASLIMEELDPENFGYIELWQLETLLLQRDAY). Ca(2+) is bound by residues Asp-281, Asn-283, Asp-285, Lys-287, and Glu-292. The chain crosses the membrane as a helical span at residues 393–413 (SWVLLVWVMLMAILFVWKFLE). Residues 414–475 (YREKAAFKVM…PFDDNINFHK (62 aa)) lie on the Extracellular side of the membrane. Residues 431–587 (KGAAETLKLN…LLVVVYIMLI (157 aa)) enclose the Ferric oxidoreductase domain. A helical transmembrane segment spans residues 476–496 (IIACAIAIGILVHAGTHLACD). Over 497–531 (FPRIINSSPEQFVLIASAFNGTKPTFKDLMTGAEG) the chain is Cytoplasmic. The helical transmembrane segment at 532–552 (ITGISMVILTTIAFTLASTHF) threads the bilayer. The Extracellular portion of the chain corresponds to 553-574 (RRNRVRLPAPLDRLTGFNAFWY). The chain crosses the membrane as a helical span at residues 575–595 (THHLLVVVYIMLIVHGTFLFF). Over 596–603 (ADKWYQKT) the chain is Cytoplasmic. A helical membrane pass occupies residues 604-621 (TWMYISVPLVLYVAERSL). Residues 622–750 (RACRSKHYSV…PYGAPAQDYR (129 aa)) lie on the Extracellular side of the membrane. Residues 626-748 (SKHYSVKILK…DGPYGAPAQD (123 aa)) enclose the FAD-binding FR-type domain. A helical transmembrane segment spans residues 751–771 (SYDVLLLIGLGIGATPFISIL). Residues 772-952 (KDLLNNSRDE…TRFEFHKEHF (181 aa)) are Cytoplasmic-facing.

It belongs to the RBOH (TC 5.B.1.3) family. As to quaternary structure, monomer and homodimer. As to expression, expressed in roots, inflorescences, leaves and stems.

It is found in the membrane. Functionally, calcium-dependent NADPH oxidase that generates superoxide. The polypeptide is Respiratory burst oxidase homolog protein E (RBOHE) (Arabidopsis thaliana (Mouse-ear cress)).